Consider the following 310-residue polypeptide: 4-diphosphocytidyl-2-C-methyl-D-erythritol kinase (310 aa).

K20 is a catalytic residue. 106–116 (PMGGGLGGGSS) serves as a coordination point for ATP. The active site involves D148.

This sequence belongs to the GHMP kinase family. IspE subfamily. Homodimer.

The catalysed reaction is 4-CDP-2-C-methyl-D-erythritol + ATP = 4-CDP-2-C-methyl-D-erythritol 2-phosphate + ADP + H(+). The protein operates within isoprenoid biosynthesis; isopentenyl diphosphate biosynthesis via DXP pathway; isopentenyl diphosphate from 1-deoxy-D-xylulose 5-phosphate: step 3/6. Catalyzes the phosphorylation of the position 2 hydroxy group of 4-diphosphocytidyl-2C-methyl-D-erythritol. This is 4-diphosphocytidyl-2-C-methyl-D-erythritol kinase from Yersinia pseudotuberculosis serotype O:3 (strain YPIII).